The primary structure comprises 517 residues: GTPase Obg (517 aa).

Positions 2–159 (ATFVDTVTLH…GDVVLELKVV (158 aa)) constitute an Obg domain. Positions 160–336 (ADVALVGYPS…LSFALAELVK (177 aa)) constitute an OBG-type G domain. Residues 166–173 (GYPSAGKS), 191–195 (FTTLH), 212–215 (DVPG), 288–291 (NKID), and 317–319 (STV) contribute to the GTP site. Residues Ser173 and Thr193 each contribute to the Mg(2+) site. The 85-residue stretch at 355-439 (PRAVDEKPFT…GDGVVFDWEP (85 aa)) folds into the OCT domain. The segment at 490–517 (EGEAGLWADEDGTGQDGTDEDATTDAKA) is disordered. The span at 497–517 (ADEDGTGQDGTDEDATTDAKA) shows a compositional bias: acidic residues.

This sequence belongs to the TRAFAC class OBG-HflX-like GTPase superfamily. OBG GTPase family. As to quaternary structure, monomer. It depends on Mg(2+) as a cofactor.

The protein resides in the cytoplasm. Its function is as follows. An essential GTPase which binds GTP, GDP and possibly (p)ppGpp with moderate affinity, with high nucleotide exchange rates and a fairly low GTP hydrolysis rate. Plays a role in control of the cell cycle, stress response, ribosome biogenesis and in those bacteria that undergo differentiation, in morphogenesis control. This is GTPase Obg from Clavibacter sepedonicus (Clavibacter michiganensis subsp. sepedonicus).